Consider the following 88-residue polypeptide: Small ribosomal subunit protein uS17 (88 aa).

It belongs to the universal ribosomal protein uS17 family. In terms of assembly, part of the 30S ribosomal subunit.

Functionally, one of the primary rRNA binding proteins, it binds specifically to the 5'-end of 16S ribosomal RNA. This is Small ribosomal subunit protein uS17 from Lactobacillus helveticus (strain DPC 4571).